Reading from the N-terminus, the 231-residue chain is (S)-2-haloacid dehalogenase 4A (231 aa).

Aspartate 11 (nucleophile) is an active-site residue. Residues 12–13, arginine 42, and 119–120 each bind an (S)-2-haloacid; these read AY and SN. An important for catalytic activity region spans residues 176-181; that stretch reads SSNAWD.

This sequence belongs to the HAD-like hydrolase superfamily. S-2-haloalkanoic acid dehalogenase family.

It catalyses the reaction an (S)-2-haloacid + H2O = a (2R)-2-hydroxycarboxylate + a halide anion + H(+). The catalysed reaction is (S)-2-chloropropanoate + H2O = (R)-lactate + chloride + H(+). Functionally, catalyzes the hydrolytic dehalogenation of small (S)-2-haloalkanoic acids to yield the corresponding (R)-2-hydroxyalkanoic acids. Acts on acids of short chain lengths, C(2) to C(4), with inversion of configuration at C-3. Active with 2-halogenated carboxylic acids and converts only the S-isomer (or L-isomer) of 2-chloropropionic acid with inversion of configuration to produce R-lactate (or D-isomer). This chain is (S)-2-haloacid dehalogenase 4A, found in Burkholderia cepacia (Pseudomonas cepacia).